The following is a 79-amino-acid chain: Putative defensin-like protein 80 (79 aa).

The N-terminal stretch at 1-26 is a signal peptide; sequence MDVQRSSYIFIALSIIAMFLITGVKP. Cystine bridges form between cysteine 32-cysteine 65, cysteine 36-cysteine 58, cysteine 44-cysteine 63, and cysteine 48-cysteine 64.

The protein belongs to the DEFL family.

Its subcellular location is the secreted. This chain is Putative defensin-like protein 80 (LCR81), found in Arabidopsis thaliana (Mouse-ear cress).